Consider the following 244-residue polypeptide: Sperm-egg fusion protein Juno (244 aa).

A signal peptide spans 1 to 19 (MAQWWLILLGLWTVLPSLA). Disulfide bonds link Cys27-Cys55, Cys47-Cys95, Cys56-Cys99, Cys79-Cys166, Cys86-Cys137, Cys126-Cys200, Cys130-Cys180, and Cys143-Cys160. The tract at residues 62–81 (WEAHLDEPLLFNFSMTHCGL) is important for interaction with IZUMO1. Asn73 carries N-linked (GlcNAc...) asparagine glycosylation. Residues 223–244 (SASAPQLSYSITAFSLCLLLHA) constitute a propeptide that is removed on maturation.

The protein belongs to the folate receptor family. Monomer. Interacts with IZUMO1; the interaction is direct. IZUMO1 and IZUMO1R/JUNO form a complex with 1:1 stoichiometry. Interacts with FCRL3/MAIA; FCRL3/MAIA replaces IZUMO1R/JUNO as IZUMO1 receptor after sperm-egg adhesion, thereby permitting species-specific gamete fusion. Interacts with WDR54. Post-translationally, the protein is rapidly cleaved following fertilization, being only weakly detectable in zona-intact fertilized eggs at telophase II and undetectable at the pronuclear stage. Sheding is probably required to block to polyspermy and ensuring egg fusion with a single sperm. As to expression, expressed in the oocyte (at protein level).

It is found in the cell membrane. It localises to the cell projection. The protein localises to the microvillus membrane. Receptor for IZUMO1 present at the cell surface of oocytes (oolemma), which is essential for species-specific gamete recognition and fertilization. The IZUMO1:IZUMO1R/JUNO interaction is a necessary adhesion event between sperm and egg that is required for fertilization but is not sufficient for cell fusion. The ligand-receptor interaction probably does not act as a membrane 'fusogen'. Does not bind folate. The chain is Sperm-egg fusion protein Juno (Izumo1r) from Rattus norvegicus (Rat).